The following is a 15281-amino-acid chain: Cyclosporin synthetase simA (15281 aa).

The interval 34 to 463 (SFAQGRLWFL…AVHVKTMPLT (430 aa)) is condensation 1. Residues 513–918 (SYSELDHKSD…NSDQVRDAAV (406 aa)) form an adenylation 1 region. A Carrier 1 domain is found at 1026–1100 (APRNEIEAVL…DLAATIQRGS (75 aa)). The residue at position 1060 (Ser-1060) is an O-(pantetheine 4'-phosphoryl)serine. A condensation 2 region spans residues 1118–1549 (SFAQGRLWFL…QTPIMTMPLT (432 aa)). Positions 1599–2004 (SYAELDQRSD…SSAGVHDAVV (406 aa)) are adenylation 2. Residues 2067–2251 (SWTSMYDGTL…LEELEEELLV (185 aa)) form a methyltransferase (M) domain 1 region. Positions 2524–2598 (APRDSIEAII…DLAATIQQDT (75 aa)) constitute a Carrier 2 domain. Ser-2558 carries the post-translational modification O-(pantetheine 4'-phosphoryl)serine. The segment at 2616–3044 (SFAQGRLWFL…EPDMPVASMA (429 aa)) is condensation 3. Residues 3096-3498 (SYADLDRKSD…SHDLVTDAAV (403 aa)) are adenylation 3. The tract at residues 3562 to 3749 (SMYDGSLIKK…EDELLVDPAF (188 aa)) is methyltransferase (M) domain 2. A Carrier 3 domain is found at 4011–4085 (APRTEIERVL…DLVLIVQQGS (75 aa)). O-(pantetheine 4'-phosphoryl)serine is present on Ser-4045. The segment at 4100–4530 (VPQSFAQGRL…GPDVPISTLP (431 aa)) is condensation 4. The adenylation 4 stretch occupies residues 4582 to 4986 (SYAQLDRESD…FLNDGFVEDV (405 aa)). The tract at residues 5052–5241 (TSMYDGTEID…ELLVDPAFFT (190 aa)) is methyltransferase (M) domain 3. The Carrier 4 domain maps to 5503–5577 (PPRNSVEATV…DLAAVIQRNS (75 aa)). At Ser-5537 the chain carries O-(pantetheine 4'-phosphoryl)serine. Positions 5592 to 6023 (VPQSFAQGRL…QPLTPLAVLP (432 aa)) are condensation 5. Residues 6075–6478 (TYAQLDQQSD…SHNSVQDAAV (404 aa)) form an adenylation 5 region. Residues 6545 to 6729 (WTSMYDGSEI…ELEANEEELL (185 aa)) are methyltransferase (M) domain 4. Positions 7000–7074 (APRNEIEAIL…DLAASIQRES (75 aa)) constitute a Carrier 5 domain. Position 7034 is an O-(pantetheine 4'-phosphoryl)serine (Ser-7034). The condensation 6 stretch occupies residues 7092 to 7517 (SFAQGRLWFL…VLDQPLTPIS (426 aa)). Residues 7572-7976 (TYAQLDEQSD…DHKSVLAATV (405 aa)) form an adenylation 6 region. The Carrier 6 domain occupies 8060 to 8134 (PPRDEVEAVL…DLADIIRRGS (75 aa)). Residue Ser-8094 is modified to O-(pantetheine 4'-phosphoryl)serine. Positions 8152–8582 (SFAQGRLWFL…PKQRLMAMPI (431 aa)) are condensation 7. Residues 8633-9038 (TYADLDGQSN…GHDLVHDAAV (406 aa)) are adenylation 7. A methyltransferase (M) domain 5 region spans residues 9111–9288 (PVNEMKEWLD…EESEEELLVD (178 aa)). The 75-residue stretch at 9555–9629 (APRNDTEIVL…DLAASIEQGS (75 aa)) folds into the Carrier 7 domain. Ser-9589 is subject to O-(pantetheine 4'-phosphoryl)serine. A condensation 8 region spans residues 9647–10077 (SYAQGRLWFL…QVSISTMPLT (431 aa)). The adenylation 8 stretch occupies residues 10127–10529 (SYTSLDQKSE…GNKAIHDAAV (403 aa)). The tract at residues 10588-10768 (RDFTSWTSMY…DQIRQEVARL (181 aa)) is methyltransferase (M) domain 6. Positions 11052-11126 (APRNDIEAVL…DLADVVQTGS (75 aa)) constitute a Carrier 8 domain. Position 11086 is an O-(pantetheine 4'-phosphoryl)serine (Ser-11086). Residues 11144-11567 (SFSQGRLWFL…HANLATLPLT (424 aa)) are condensation 9. Positions 11616-12019 (TYTELDERSS…RDPAISDSAV (404 aa)) are adenylation 9. Residues 12124 to 12198 (APRNDIETII…QLAASIQQGS (75 aa)) enclose the Carrier 9 domain. At Ser-12158 the chain carries O-(pantetheine 4'-phosphoryl)serine. Positions 12216–12645 (SFAQGRLWFL…IAISTMPLVD (430 aa)) are condensation 10. Residues 12696–13096 (TYAELDQQSD…SDSSINDAVV (401 aa)) form an adenylation 10 region. The segment at 13162 to 13343 (YDGSLIPREE…EDDEEELLVD (182 aa)) is methyltransferase (M) domain 7. Residues 13620–13694 (APRTEIEVVL…DLAASILQGS (75 aa)) enclose the Carrier 10 domain. Ser-13654 bears the O-(pantetheine 4'-phosphoryl)serine mark. Residues 13710–14143 (EQSFAQGRLW…PQSPIATMPL (434 aa)) form a condensation 11 region. Residues 14194–14598 (TYAELDRLSD…SENSVTDAAV (405 aa)) form an adenylation 11 region. Residues 14695 to 14769 (APRNETEAAI…SLAGKLEQQQ (75 aa)) form the Carrier 11 domain. Residue Ser-14729 is modified to O-(pantetheine 4'-phosphoryl)serine. Residues 14814–15158 (DMYPATQTQI…HPEAEIEGQQ (345 aa)) form a condensation 12 region. Positions 15169–15224 (QARQANGHAPNGTNGTNGTNGTNGANGTNGTNGTNGTHANGINGSNGVNGRDSNVV) are disordered. A compositionally biased stretch (low complexity) spans 15173 to 15211 (ANGHAPNGTNGTNGTNGTNGANGTNGTNGTNGTHANGIN). Over residues 15213–15224 (SNGVNGRDSNVV) the composition is skewed to polar residues.

Belongs to the NRP synthetase family. Requires pantetheine 4'-phosphate as cofactor.

Nonribosomal peptide synthetase; part of the gene cluster that mediates the biosynthesis of the cycloundecapeptide cyclosporin A (CsA), a compound with antifungal activity used as an immunosuppressant drug. Cyclosporin A contains three non-proteinogenic amino acids: D-alanine, alpha-amino butyric acid and the unusual amino acid (4R)-4-[(E)-2-butenyl]-4-methyl-l-threonine (Bmt). The nonribosomal peptide synthetase (NRPS) catalyzes the elongation and cyclization of the undecapeptide chain. SimA contains 11 modules responsible for sequential uptake of substrates and chain elongation. In addition to the core condensation-adenylation-thiolation (C-A-T) domains present in each module, seven modules contain an additional N-methylation (M) domain (modules 2, 3, 4, 5, 7, 8, and 10). The terminal C domain (C12 or Ct) is implicated in cyclization of the peptidyl chains to form CsA. The first module (A1) takes up D-Ala which is provided by the alanine racemase simB. The A2, A3, A8, and A10 domains have the same substrate-specific signature for recognition of leucine residues. The unusual amino acid (4R)-4-[(E)-2-butenyl]-4-methyl-l-threonine (Bmt) is recognized by the fifth module (A5). The A11 domain recognizes L-Ala. The PKS simG mediates the biosynthesis of 3R-hydroxyl-4R-methyl-6E-octenoic acid from acetyl coenzyme A (acetyl-CoA), malonyl-CoA, and S-adenosylmethionine, and 3R-hydroxyl-4R-methyl-6E-octenoic acid is then be repeatedly oxidized by simI to 3R-hydroxy-4R-methyl-2-keto-6E-octenoic acid. The latter is likely converted to Bmt through the action of the aminotransferase SimJ. This is Cyclosporin synthetase simA from Tolypocladium inflatum (Cyclosporin fungus).